Here is a 453-residue protein sequence, read N- to C-terminus: GTPase Der (453 aa).

EngA-type G domains lie at phenylalanine 3–threonine 167 and isoleucine 187–asparagine 360. GTP is bound by residues glycine 9–serine 16, aspartate 56–leucine 60, asparagine 119–glutamate 122, glycine 193–serine 200, aspartate 240–leucine 244, and asparagine 305–aspartate 308. Positions threonine 361 to glycine 445 constitute a KH-like domain.

Belongs to the TRAFAC class TrmE-Era-EngA-EngB-Septin-like GTPase superfamily. EngA (Der) GTPase family. As to quaternary structure, associates with the 50S ribosomal subunit.

Functionally, GTPase that plays an essential role in the late steps of ribosome biogenesis. The sequence is that of GTPase Der from Azorhizobium caulinodans (strain ATCC 43989 / DSM 5975 / JCM 20966 / LMG 6465 / NBRC 14845 / NCIMB 13405 / ORS 571).